We begin with the raw amino-acid sequence, 6306 residues long: Adhesion G-protein coupled receptor V1 (6306 aa).

The N-terminal stretch at 1–29 (MSVFLGPGMPSASLLVNLLSALLILFVFG) is a signal peptide. Calx-beta domains lie at 30–117 (ETEI…FHLT), 133–237 (VTVT…IQLK), 262–362 (PVRF…HIML), 388–488 (KPYG…LQIL), 645–745 (PAIA…TLSL), 763–861 (DLII…VVLS), 876–979 (VNIT…VILL), 993–1093 (ATLR…IILL), 1108–1208 (TVII…LKLV), 1444–1544 (AMPR…FILK), 1564–1665 (TIQK…RVTL), 1710–1809 (TGLP…VELL), 1850–1952 (ILVT…VSVL), 1966–2079 (TLTV…IELL), 2107–2206 (QLII…VQLM), 2222–2324 (VIII…VQLT), 2441–2541 (TLCL…FLIS), 2584–2676 (NISP…VSLV), 2689–2789 (DTVR…QVIL), 2814–2925 (LTVE…VNLT), 2947–3048 (TAQV…LILT), and 3063–3172 (LIIV…CTLF). At 30–5908 (ETEIRFTGQT…TDNLSSYNEA (5879 aa)) the chain is on the extracellular side. 6 EAR repeats span residues 3255-3296 (VFSV…RWQG), 3297-3345 (IFIP…TFTS), 3348-3393 (KLFL…RWNG), 3395-3439 (SFVL…RWSG), 3441-3488 (GFIN…IWEM), and 3492-3534 (SFRY…CWNS). 13 consecutive Calx-beta domains span residues 3525–3625 (DMSA…KVQL), 3639–3739 (SVTI…IVTL), 3775–3875 (GLVG…VTIT), 3899–4006 (AEIM…ISLI), 4020–4123 (VTVV…IQLI), 4139–4239 (IIIR…EFQL), 4255–4354 (ANIT…LTIT), 4387–4489 (RIII…ILLT), 4512–4612 (SPFG…IIKL), 4634–4734 (EFGD…VIQL), 4992–5095 (SGFI…INLT), 5288–5332 (AVEE…YVFL), and 5368–5468 (IGFS…FVEL). Residues 5747 to 5903 (SILALHWYPQ…AVYARTDNLS (157 aa)) enclose the GAIN-B domain. 2 disulfides stabilise this stretch: Cys-5856-Cys-5885 and Cys-5873-Cys-5887. Residues 5856-5903 (CLLWNQAAASWLSDSQFCKVVEETADYVECACSHMSVYAVYARTDNLS) form a GPS region. A helical transmembrane segment spans residues 5909-5929 (FFTSGFICISGLCLAVLSHIF). The Cytoplasmic segment spans residues 5930–5939 (CARYSMFAAK). The helical transmembrane segment at 5940 to 5960 (LLTHMMAASLGTQILFLASAY) threads the bilayer. Topologically, residues 5961 to 5979 (ASPQLAEESCSAMAAVTHY) are extracellular. A helical transmembrane segment spans residues 5980–6000 (LYLCQFSWMLIQSVNFWYVLV). Residues 6001 to 6010 (MNDEHTERRY) lie on the Cytoplasmic side of the membrane. A helical membrane pass occupies residues 6011–6031 (LLFFLLSWGLPAFVVILLIVI). The Extracellular portion of the chain corresponds to 6032-6059 (LKGIYHQSMSQIYGLIHGDLCFIPNVYA). A helical membrane pass occupies residues 6060–6080 (ALFTAALVPLTCLVVVFVVFI). The Cytoplasmic portion of the chain corresponds to 6081–6104 (HAYQVKPQWKAYDDVFRGRTNAAE). The chain crosses the membrane as a helical span at residues 6105–6125 (IPLILYLFALISVTWLWGGLH). Topologically, residues 6126-6133 (MAYRHFWM) are extracellular. A helical membrane pass occupies residues 6134–6154 (LVLFVIFNSLQGLYVFMVYFI). Residues 6155–6306 (LHNQMCCPMK…RRIPIADTHL (152 aa)) are Cytoplasmic-facing. Residues 6216–6248 (ASFQQGSQASPDLKPSPQNGATFPSSGGYGQGS) are disordered. The segment covering 6217–6240 (SFQQGSQASPDLKPSPQNGATFPS) has biased composition (polar residues).

It belongs to the G-protein coupled receptor 2 family. Adhesion G-protein coupled receptor (ADGR) subfamily. As to quaternary structure, forms a heterodimer, consisting of a large extracellular region (alpha subunit) non-covalently linked to a seven-transmembrane moiety (beta subunit). Component of USH2 complex, composed of ADGRV1, PDZD7, USH2A and WHRN. Interacts with USH2A and WHRN. Interacts (via the cytoplasmic region) with PDZD7. Interacts (via the cytoplasmic region) with MYO7A (via MyTH4-FERM domains). Autoproteolytically cleaved into 2 subunits, an extracellular alpha subunit and a seven-transmembrane subunit. As to expression, expressed at low levels in adult tissues.

The protein localises to the cell membrane. It is found in the cell projection. It localises to the stereocilium membrane. Its subcellular location is the photoreceptor inner segment. G-protein coupled receptor which has an essential role in the development of hearing and vision. Couples to G-alpha(i)-proteins, GNAI1/2/3, G-alpha(q)-proteins, GNAQ, as well as G-alpha(s)-proteins, GNAS, inhibiting adenylate cyclase (AC) activity and cAMP production. Required for the hair bundle ankle formation, which connects growing stereocilia in developing cochlear hair cells of the inner ear. In response to extracellular calcium, activates kinases PKA and PKC to regulate myelination by inhibiting the ubiquitination of MAG, thus enhancing the stability of this protein in myelin-forming cells of the auditory pathway. In retina photoreceptors, the USH2 complex is required for the maintenance of periciliary membrane complex that seems to play a role in regulating intracellular protein transport. Involved in the regulation of bone metabolism. Its function is as follows. Cleaved ADGRV1 beta-subunit couples with G-alpha(i)-proteins, GNAI1/2/3, and constitutively inhibits adenylate cyclase (AC) activity with a stronger effect than full ADGRV1. This is Adhesion G-protein coupled receptor V1 from Homo sapiens (Human).